The primary structure comprises 939 residues: Translation initiation factor IF-2 (939 aa).

The disordered stretch occupies residues 48-355 (KFAPAPKVEN…KPEKKEKEEE (308 aa)). The span at 79–93 (QQNQAPKQPQQGTQN) shows a compositional bias: low complexity. Residues 114–130 (SRDKNSRRDNNNRDGQR) are compositionally biased toward basic and acidic residues. The segment covering 131–257 (DNNGGYRNND…NNDRNNNGGF (127 aa)) has biased composition (low complexity). Residues 287–355 (RNNDRRDSAP…KPEKKEKEEE (69 aa)) show a composition bias toward basic and acidic residues. The 170-residue stretch at 440–609 (PRPPVVCVMG…LLTAEVNELK (170 aa)) folds into the tr-type G domain. The tract at residues 449–456 (GHVDHGKT) is G1. Residue 449–456 (GHVDHGKT) coordinates GTP. A G2 region spans residues 474-478 (GITQK). The interval 495–498 (DTPG) is G3. GTP-binding positions include 495-499 (DTPGH) and 549-552 (NKID). Residues 549 to 552 (NKID) form a G4 region. Residues 585 to 587 (SAH) form a G5 region.

The protein belongs to the TRAFAC class translation factor GTPase superfamily. Classic translation factor GTPase family. IF-2 subfamily.

It is found in the cytoplasm. Functionally, one of the essential components for the initiation of protein synthesis. Protects formylmethionyl-tRNA from spontaneous hydrolysis and promotes its binding to the 30S ribosomal subunits. Also involved in the hydrolysis of GTP during the formation of the 70S ribosomal complex. The protein is Translation initiation factor IF-2 of Lachnospira eligens (strain ATCC 27750 / DSM 3376 / VPI C15-48 / C15-B4) (Eubacterium eligens).